The primary structure comprises 515 residues: Bifunctional purine biosynthesis protein PurH (515 aa).

Residues 1 to 145 form the MGS-like domain; the sequence is MTKRALISVS…KNHASVTVVV (145 aa).

Belongs to the PurH family.

It catalyses the reaction (6R)-10-formyltetrahydrofolate + 5-amino-1-(5-phospho-beta-D-ribosyl)imidazole-4-carboxamide = 5-formamido-1-(5-phospho-D-ribosyl)imidazole-4-carboxamide + (6S)-5,6,7,8-tetrahydrofolate. It carries out the reaction IMP + H2O = 5-formamido-1-(5-phospho-D-ribosyl)imidazole-4-carboxamide. It functions in the pathway purine metabolism; IMP biosynthesis via de novo pathway; 5-formamido-1-(5-phospho-D-ribosyl)imidazole-4-carboxamide from 5-amino-1-(5-phospho-D-ribosyl)imidazole-4-carboxamide (10-formyl THF route): step 1/1. Its pathway is purine metabolism; IMP biosynthesis via de novo pathway; IMP from 5-formamido-1-(5-phospho-D-ribosyl)imidazole-4-carboxamide: step 1/1. The sequence is that of Bifunctional purine biosynthesis protein PurH from Streptococcus suis (strain 98HAH33).